Consider the following 205-residue polypeptide: Penta-EF hand domain-containing protein 2 (205 aa).

EF-hand domains lie at 45–75 (EMQS…GGTP), 76–111 (LGIE…INNL), and 119–141 (DRNF…SGFQ). Residues Asp-54, Asn-56, Ser-58, Thr-60, Glu-65, Asp-89, Asn-91, Asn-93, Gln-95, and Glu-100 each coordinate Ca(2+).

This sequence belongs to the Peflin/Sorcin family. In contrast to pefA, does not form homodimers in presence of Ca(2+). May form heterodimers with pefA.

The protein resides in the cytoplasm. The protein localises to the membrane. The polypeptide is Penta-EF hand domain-containing protein 2 (pefB) (Dictyostelium discoideum (Social amoeba)).